Here is a 127-residue protein sequence, read N- to C-terminus: Putative membrane protein insertion efficiency factor (127 aa).

Positions 71 to 106 are disordered; the sequence is DPPPPPRLHRAAAARMPRQRDADPRDTTRCSSTGAE. A compositionally biased stretch (basic and acidic residues) spans 88-98; the sequence is RQRDADPRDTT.

The protein belongs to the UPF0161 family.

Its subcellular location is the cell inner membrane. Functionally, could be involved in insertion of integral membrane proteins into the membrane. This is Putative membrane protein insertion efficiency factor from Sorangium cellulosum (strain So ce56) (Polyangium cellulosum (strain So ce56)).